The sequence spans 271 residues: Aquaporin-1 (271 aa).

The Cytoplasmic segment spans residues 1-11 (MASEFKKKLFW). Residues 12 to 29 (RAVVAEFLAMILFIFISI) traverse the membrane as a helical segment. Residues 30–48 (GSALGFHYPIKSNQTTGAV) lie on the Extracellular side of the membrane. The N-linked (GlcNAc...) asparagine glycan is linked to asparagine 42. The chain crosses the membrane as a helical span at residues 49–67 (QDNVKVSLAFGLSIATLAQ). The Cytoplasmic segment spans residues 68–70 (SVG). An intramembrane segment occupies 71-84 (HISGAHLNPAVTLG). The NPA 1 motif lies at 78–80 (NPA). Residues 85–92 (LLLSCQIS) are Cytoplasmic-facing. Residues 93–111 (VLRAIMYIIAQCVGAIVAT) traverse the membrane as a helical segment. Residues 112 to 135 (AILSGITSSLPDNSLGLNALAPGV) are Extracellular-facing. A helical transmembrane segment spans residues 136–155 (NSGQGLGIEIIGTLQLVLCV). Residues 156–165 (LATTDRRRRD) are Cytoplasmic-facing. A helical transmembrane segment spans residues 166–183 (LGGSGPLAIGFSVALGHL). The Extracellular portion of the chain corresponds to 184-188 (LAIDY). An intramembrane segment occupies 189–201 (TGCGINPARSFGS). Residues 194–196 (NPA) carry the NPA 2 motif. Topologically, residues 202–208 (SVITHNF) are extracellular. A helical membrane pass occupies residues 209–226 (QDHWIFWVGPFIGAALAV). At 227–271 (LIYDFILAPRSSDLTDRVKVWTSGQVEEYDLDADDINSRVEMKPK) the chain is on the cytoplasmic side. Serine 249 carries the post-translational modification Phosphoserine. Tyrosine 255 bears the Phosphotyrosine mark. At serine 264 the chain carries Phosphoserine.

The protein belongs to the MIP/aquaporin (TC 1.A.8) family. In terms of assembly, homotetramer; each monomer provides an independent water pore. Component of the ankyrin-1 complex in the erythrocyte, composed of ANK1, RHCE, RHAG, SLC4A1, EPB42, GYPA, GYPB and AQP1. Interacts with EPHB2; involved in endolymph production in the inner ear. Identified in a complex with STOM. Interacts (via the N-terminal) with ANK1 (via ANK 1-5 repeats). Interacts (via the C-terminal) with EPB42.

It is found in the cell membrane. The catalysed reaction is H2O(in) = H2O(out). It carries out the reaction nitric oxide(out) = nitric oxide(in). It catalyses the reaction CO2(out) = CO2(in). The enzyme catalyses glycerol(in) = glycerol(out). The catalysed reaction is H2O2(out) = H2O2(in). It carries out the reaction K(+)(in) = K(+)(out). It catalyses the reaction Na(+)(in) = Na(+)(out). Its function is as follows. Forms a water channel that facilitates the transport of water across cell membranes, playing a crucial role in water homeostasis in various tissues. Could also be permeable to small solutes including hydrogen peroxide, glycerol and gases such as amonnia (NH3), nitric oxide (NO) and carbon dioxide (CO2). Recruited to the ankyrin-1 complex, a multiprotein complex of the erythrocyte membrane, it could be part of a CO2 metabolon, linking facilitated diffusion of CO2 across the membrane, anion exchange of Cl(-)/HCO3(-) and interconversion of dissolved CO2 and carbonic acid in the cytosol. In vitro, it shows non-selective gated cation channel activity and may be permeable to cations like K(+) and Na(+) in vivo. The sequence is that of Aquaporin-1 from Bos taurus (Bovine).